A 292-amino-acid chain; its full sequence is Probable vesicular-fusion protein sec17 homolog (292 aa).

It belongs to the SNAP family.

The protein resides in the membrane. Functionally, required for vesicular transport between the endoplasmic reticulum and the Golgi apparatus. The polypeptide is Probable vesicular-fusion protein sec17 homolog (Neurospora crassa (strain ATCC 24698 / 74-OR23-1A / CBS 708.71 / DSM 1257 / FGSC 987)).